The chain runs to 392 residues: Xyloside xylosyltransferase 1 (392 aa).

Residues 1-19 lie on the Cytoplasmic side of the membrane; it reads MGLLRGGAACARAMARLGA. The chain crosses the membrane as a helical; Signal-anchor for type II membrane protein span at residues 20-42; that stretch reads LRSHYCALLLAAALAVCAFYYLG. Over 43–392 the chain is Lumenal; sequence SGRETFSSAT…GNCNTPIPED (350 aa). UDP-alpha-D-xylose is bound at residue 103 to 105; it reads MFT. Aspartate 225 contacts Mn(2+). Leucine 226 lines the UDP-alpha-D-xylose pocket. Aspartate 227 contacts Mn(2+). The segment at 262–265 is interaction with target proteins; it reads HTFW. Residues serine 289, leucine 327, and glutamine 330 each coordinate UDP-alpha-D-xylose. Residues glutamine 330 and tryptophan 359 each coordinate a glycoprotein. Cystine bridges form between cysteine 349–cysteine 374 and cysteine 356–cysteine 385. Histidine 382 lines the Mn(2+) pocket. Asparagine 384 is an a glycoprotein binding site.

This sequence belongs to the glycosyltransferase 8 family. As to quaternary structure, homodimer. Dimer formation may be essential for the retention in endoplasmic reticulum. Mg(2+) is required as a cofactor. Mn(2+) serves as cofactor.

Its subcellular location is the endoplasmic reticulum membrane. The catalysed reaction is 3-O-[alpha-D-xylosyl-(1-&gt;3)-beta-D-glucosyl]-L-seryl-[EGF-like domain protein] + UDP-alpha-D-xylose = 3-O-[alpha-D-xylosyl-(1-&gt;3)-alpha-D-xylosyl-(1-&gt;3)-beta-D-glucosyl]-L-seryl-[EGF-like domain protein] + UDP + H(+). In terms of biological role, alpha-1,3-xylosyltransferase, which elongates the O-linked xylose-glucose disaccharide attached to EGF-like repeats in the extracellular domain of target proteins by catalyzing the addition of the second xylose. Known targets include Notch proteins and coagulation factors, such as F9. The protein is Xyloside xylosyltransferase 1 (Xxylt1) of Mus musculus (Mouse).